Consider the following 913-residue polypeptide: Ubiquitin carboxyl-terminal hydrolase 20 (913 aa).

The segment at 6–111 (DLCPHLDSIG…GSSKFSEQDS (106 aa)) adopts a UBP-type zinc-finger fold. Zn(2+)-binding residues include C8, H10, C30, C33, C43, C48, C53, H60, H64, H70, C83, and C86. 3 positions are modified to phosphoserine: S111, S131, and S133. Residues 144-684 (TGMKNLGNSC…EGYVLFYRKS (541 aa)) form the USP domain. Residue C153 is the Nucleophile of the active site. The tract at residues 256–414 (LTEARDSDSS…SSSPPRASPV (159 aa)) is disordered. T257 is modified (phosphothreonine). Residues 258–278 (EARDSDSSDTDEKREGDRSPS) show a composition bias toward basic and acidic residues. S304 carries the phosphoserine modification. Positions 315–331 (EASRAISEKERMKDRKF) are enriched in basic and acidic residues. S367 is subject to Phosphoserine. The residue at position 376 (T376) is a Phosphothreonine. Residues S407 and S412 each carry the phosphoserine modification. H642 functions as the Proton acceptor in the catalytic mechanism. DUSP domains are found at residues 686-779 (EEAV…LYVC) and 788-891 (ALAK…RQSV).

It belongs to the peptidase C19 family. USP20/USP33 subfamily. In terms of assembly, interacts with VHL, leading to its ubiquitination and subsequent degradation. Interacts with CCP110. Interacts with DIO2. Interacts with HIF1A. Interacts with ADRB2. Interacts with USP18. In terms of processing, ubiquitinated via a VHL-dependent pathway for proteasomal degradation.

The protein localises to the cytoplasm. Its subcellular location is the endoplasmic reticulum. The protein resides in the perinuclear region. It is found in the cytoskeleton. It localises to the microtubule organizing center. The protein localises to the centrosome. The enzyme catalyses Thiol-dependent hydrolysis of ester, thioester, amide, peptide and isopeptide bonds formed by the C-terminal Gly of ubiquitin (a 76-residue protein attached to proteins as an intracellular targeting signal).. Functionally, deubiquitinating enzyme that plays a role in many cellular processes including autophagy, cellular antiviral response or membrane protein biogenesis. Attenuates TLR4-mediated NF-kappa-B signaling by cooperating with beta-arrestin-2/ARRB2 and inhibiting TRAF6 autoubiquitination. Promotes cellular antiviral responses by deconjugating 'Lys-33' and 'Lys-48'-linked ubiquitination of STING1 leading to its stabilization. Plays an essential role in autophagy induction by regulating the ULK1 stability through deubiquitination of ULK1. Acts as a positive regulator for NF-kappa-B activation by TNF-alpha through deubiquitinating 'Lys-48'-linked polyubiquitination of SQSTM1, leading to its increased stability. Acts as a regulator of G-protein coupled receptor (GPCR) signaling by mediating the deubiquitination beta-2 adrenergic receptor (ADRB2). Plays a central role in ADRB2 recycling and resensitization after prolonged agonist stimulation by constitutively binding ADRB2, mediating deubiquitination of ADRB2 and inhibiting lysosomal trafficking of ADRB2. Upon dissociation, it is probably transferred to the translocated beta-arrestins, possibly leading to beta-arrestins deubiquitination and disengagement from ADRB2. This suggests the existence of a dynamic exchange between the ADRB2 and beta-arrestins. Deubiquitinates DIO2, thereby regulating thyroid hormone regulation. Deubiquitinates HIF1A, leading to stabilize HIF1A and enhance HIF1A-mediated activity. Deubiquitinates MCL1, a pivotal member of the anti-apoptotic Bcl-2 protein family to regulate its stability. Within the endoplasmic reticulum, participates with USP33 in the rescue of post-translationally targeted membrane proteins that are inappropriately ubiquitinated by the cytosolic protein quality control in the cytosol. The protein is Ubiquitin carboxyl-terminal hydrolase 20 (USP20) of Pongo abelii (Sumatran orangutan).